Reading from the N-terminus, the 601-residue chain is Sestrin homolog (601 aa).

Residues 1–11 (MISMGMTSKGQ) show a composition bias toward polar residues. The disordered stretch occupies residues 1-58 (MISMGMTSKGQNVDGAPAGNSSSEWIISSSSSPFQANKRYSLDPPFGSDYSPPASPQN). Asn-20 carries N-linked (GlcNAc...) asparagine glycosylation. Residues 21–32 (SSSEWIISSSSS) are compositionally biased toward low complexity. Residues Asn-322 and Asn-330 are each glycosylated (N-linked (GlcNAc...) asparagine). The disordered stretch occupies residues 355–425 (RRSQQQDDDD…DSSSSTLSQS (71 aa)). The span at 368 to 379 (LHDRQQDFHNAG) shows a compositional bias: basic and acidic residues. The segment covering 380 to 425 (DDSQSSNNNTTTTTTTTTTTTTTTNTNTTSNSAGGGDSSSSTLSQS) has biased composition (low complexity). 5 N-linked (GlcNAc...) asparagine glycosylation sites follow: Asn-387, Asn-388, Asn-406, Asn-438, and Asn-499.

Belongs to the sestrin family.

It is found in the nucleus. Its subcellular location is the cytoplasm. May function as a negative feedback regulator of TOR function. This chain is Sestrin homolog, found in Dictyostelium discoideum (Social amoeba).